The following is a 320-amino-acid chain: Malate dehydrogenase (320 aa).

NAD(+)-binding positions include 10-15 and Asp-34; that span reads GSGMIG. Arg-83 and Arg-89 together coordinate substrate. Residues Asn-96 and 119-121 contribute to the NAD(+) site; that span reads ITN. 2 residues coordinate substrate: Asn-121 and Arg-152. Catalysis depends on His-176, which acts as the Proton acceptor.

This sequence belongs to the LDH/MDH superfamily. MDH type 3 family.

It catalyses the reaction (S)-malate + NAD(+) = oxaloacetate + NADH + H(+). Its function is as follows. Catalyzes the reversible oxidation of malate to oxaloacetate. This Bartonella henselae (strain ATCC 49882 / DSM 28221 / CCUG 30454 / Houston 1) (Rochalimaea henselae) protein is Malate dehydrogenase.